The primary structure comprises 376 residues: Alanine racemase (376 aa).

Lysine 40 acts as the Proton acceptor; specific for D-alanine in catalysis. Position 40 is an N6-(pyridoxal phosphate)lysine (lysine 40). Arginine 138 lines the substrate pocket. The Proton acceptor; specific for L-alanine role is filled by tyrosine 270. Methionine 317 contacts substrate.

Belongs to the alanine racemase family. Pyridoxal 5'-phosphate is required as a cofactor.

It carries out the reaction L-alanine = D-alanine. It participates in amino-acid biosynthesis; D-alanine biosynthesis; D-alanine from L-alanine: step 1/1. In terms of biological role, catalyzes the interconversion of L-alanine and D-alanine. May also act on other amino acids. This is Alanine racemase (alr) from Lactobacillus gasseri (strain ATCC 33323 / DSM 20243 / BCRC 14619 / CIP 102991 / JCM 1131 / KCTC 3163 / NCIMB 11718 / NCTC 13722 / AM63).